Reading from the N-terminus, the 709-residue chain is Frizzled-6 (709 aa).

The N-terminal stretch at methionine 1–glycine 18 is a signal peptide. Residues histidine 19–threonine 132 form the FZ domain. Residues histidine 19–phenylalanine 201 lie on the Extracellular side of the membrane. Disulfide bonds link cysteine 24–cysteine 85, cysteine 32–cysteine 78, cysteine 69–cysteine 106, cysteine 95–cysteine 129, and cysteine 99–cysteine 123. A glycan (N-linked (GlcNAc...) asparagine) is linked at asparagine 38. The chain crosses the membrane as a helical span at residues isoleucine 202–isoleucine 222. Over aspartate 223–proline 233 the chain is Cytoplasmic. Residues isoleucine 234 to leucine 254 form a helical membrane-spanning segment. At glycine 255–valine 284 the chain is on the extracellular side. N-linked (GlcNAc...) asparagine glycosylation occurs at asparagine 256. A helical transmembrane segment spans residues valine 285–isoleucine 305. Residues threonine 306–alanine 324 lie on the Cytoplasmic side of the membrane. Residues valine 325–methionine 345 form a helical membrane-spanning segment. Residues asparagine 346 to phenylalanine 370 are Extracellular-facing. An N-linked (GlcNAc...) asparagine glycan is attached at asparagine 352. Residues valine 371 to isoleucine 391 form a helical membrane-spanning segment. Residues serine 392–arginine 416 lie on the Cytoplasmic side of the membrane. A helical transmembrane segment spans residues isoleucine 417–tyrosine 437. The Extracellular portion of the chain corresponds to glutamate 438 to leucine 473. Residues alanine 474–valine 494 form a helical membrane-spanning segment. The Cytoplasmic portion of the chain corresponds to glycine 495–alanine 709. Residues lysine 498 to tryptophan 503 carry the Lys-Thr-X-X-X-Trp motif, mediates interaction with the PDZ domain of Dvl family members motif. Polar residues predominate over residues glutamine 583–glutamate 594. Positions glutamine 583–alanine 709 are disordered. Over residues serine 596–glycine 616 the composition is skewed to basic and acidic residues. Polar residues predominate over residues glycine 620–arginine 629. The segment covering asparagine 630–asparagine 644 has biased composition (basic and acidic residues). Serine 656 is modified (phosphoserine). Positions cysteine 669 to proline 690 are enriched in polar residues. The segment covering alanine 697 to alanine 709 has biased composition (basic and acidic residues).

This sequence belongs to the G-protein coupled receptor Fz/Smo family. Interacts with LMBR1L. Post-translationally, ubiquitinated by ZNRF3, leading to its degradation by the proteasome. In terms of tissue distribution, expressed in both hair cells and supporting cells in the utricle, saccule, cristae and the organ of Corti in the inner ear (at protein level).

Its subcellular location is the membrane. It localises to the cell membrane. It is found in the cell surface. The protein resides in the apical cell membrane. The protein localises to the cytoplasmic vesicle membrane. Its subcellular location is the endoplasmic reticulum membrane. Functionally, receptor for Wnt proteins. Most of frizzled receptors are coupled to the beta-catenin canonical signaling pathway, which leads to the activation of disheveled proteins, inhibition of GSK-3 kinase, nuclear accumulation of beta-catenin and activation of Wnt target genes. A second signaling pathway involving PKC and calcium fluxes has been seen for some family members, but it is not yet clear if it represents a distinct pathway or if it can be integrated in the canonical pathway, as PKC seems to be required for Wnt-mediated inactivation of GSK-3 kinase. Both pathways seem to involve interactions with G-proteins. Activation by Wnt5A stimulates PKC activity via a G-protein-dependent mechanism. Involved in transduction and intercellular transmission of polarity information during tissue morphogenesis and/or in differentiated tissues. Together with FZD3, is involved in the neural tube closure and plays a role in the regulation of the establishment of planar cell polarity (PCP), particularly in the orientation of asymmetric bundles of stereocilia on the apical faces of a subset of auditory and vestibular sensory cells located in the inner ear. The chain is Frizzled-6 (Fzd6) from Mus musculus (Mouse).